The chain runs to 633 residues: Endosomal/prevacuolar sodium/hydrogen exchanger (633 aa).

A signal peptide spans 1–21 (MLSKVLLNIAFKVLLTTAKRA). Topologically, residues 22–61 (VDPDDDDELLPSPDLPGSDDPIAGDPDVDLNPVTEEMFSS) are lumenal. Residues 25–44 (DDDDELLPSPDLPGSDDPIA) form a disordered region. The span at 31-42 (LPSPDLPGSDDP) shows a compositional bias: low complexity. Residues 62–82 (WALFIMLLLLISALWSSYYLT) form a helical membrane-spanning segment. Residues 83–85 (QKR) are Cytoplasmic-facing. The chain crosses the membrane as a helical span at residues 86–106 (IRAVHETVLSIFYGMVIGLII). Residues 107-117 (RMSPGHYIQDT) lie on the Lumenal side of the membrane. The chain crosses the membrane as a helical span at residues 118–138 (VTFNSSYFFNVLLPPIILNSG). Positions 124-133 (YFFNVLLPPI) match the Amiloride-binding motif. Topologically, residues 139–152 (YELNQVNFFNNMLS) are cytoplasmic. Residues 153 to 173 (ILIFAIPGTFISAVVIGIILY) traverse the membrane as a helical segment. At 174–189 (IWTFLGLESIDISFAD) the chain is on the lumenal side. The helical transmembrane segment at 190–211 (AMSVGATLSATDPVTILSIFNA) threads the bilayer. Residues 212–217 (YKVDPK) are Cytoplasmic-facing. A helical membrane pass occupies residues 218–238 (LYTIIFGESLLNDAISIVMFE). At 239-258 (TCQKFHGQPATFSSVFEGAG) the chain is on the lumenal side. Residues 259-279 (LFLMTFSVSLLIGVLIGILVA) traverse the membrane as a helical segment. Residues 280–288 (LLLKHTHIR) are Cytoplasmic-facing. A helical membrane pass occupies residues 289-308 (RYPQIESCLILLIAYESYFF). Residues 309–313 (SNGCH) are Lumenal-facing. The helical transmembrane segment at 314 to 333 (MSGIVSLLFCGITLKHYAYY) threads the bilayer. The Cytoplasmic portion of the chain corresponds to 334-344 (NMSRRSQITIK). Residues 345–364 (YIFQLLARLSENFIFIYLGL) traverse the membrane as a helical segment. Over 365 to 376 (ELFTEVELVYKP) the chain is Cytoplasmic. Residues 377–397 (LLIIVAAISICVARWCAVFPL) traverse the membrane as a helical segment. The Lumenal segment spans residues 398–431 (SQFVNWIYRVKTIRSMSGITGENISVPDEIPYNY). The N-linked (GlcNAc...) asparagine glycan is linked to Asn-420. Residues 432–452 (QMMTFWAGLRGAVGVALALGI) form a helical membrane-spanning segment. The Cytoplasmic portion of the chain corresponds to 453–457 (QGEYK). Residues 458–478 (FTLLATVLVVVVLTVIIFGGT) traverse the membrane as a helical segment. Thr-490 bears the Phosphothreonine mark. Phosphoserine is present on Ser-494. The residue at position 498 (Thr-498) is a Phosphothreonine. A Phosphoserine modification is found at Ser-499. N-linked (GlcNAc...) asparagine glycosylation is found at Asn-515, Asn-550, and Asn-563. The interval 553–578 (TTGGNTFGGLNETENTSPNPARSSMD) is disordered. Polar residues predominate over residues 564–574 (ETENTSPNPAR). Ser-569 is modified (phosphoserine).

It belongs to the monovalent cation:proton antiporter 1 (CPA1) transporter (TC 2.A.36) family. In terms of assembly, interacts with CYP6.

It is found in the endosome membrane. It localises to the prevacuolar compartment membrane. In terms of biological role, endosomal/prevacuolar electroneutral Na(+)/H(+) exchanger which mediates intracellular sequestration of Na(+) cations, regulates vacuolar pH and contributes to osmotolerance following sudden exposure to hyperosmotic media. Also contributes to the postdiauxic/stationary phase resistance to osmotic stress and allows for the continued growth of cells until the acquired osmotolerance response can occur. Involved in hygromycin resistance probably through its influence on the electrochemical proton gradient affecting secondarily the entrance of hygromycin. Mediates pH-dependent vesicle trafficking out of the endosome. Contributes to K(+) sequestration and homeostasis. The chain is Endosomal/prevacuolar sodium/hydrogen exchanger (NHX1) from Saccharomyces cerevisiae (strain ATCC 204508 / S288c) (Baker's yeast).